A 796-amino-acid chain; its full sequence is Choline transporter-like 2 (796 aa).

N-linked (GlcNAc...) asparagine glycosylation is present at N20. A helical transmembrane segment spans residues 35 to 55 (PCLLLFVLFLGGWAFIAQYAI). N-linked (GlcNAc...) asparagine glycosylation is found at N209 and N284. Helical transmembrane passes span 304–324 (WSIV…YIAL), 332–352 (ILWF…YFSV), 386–406 (LYLS…VIVL), and 431–451 (VFFP…AIGV). N-linked (GlcNAc...) asparagine glycans are attached at residues N488 and N520. The next 5 helical transmembrane spans lie at 542-562 (VFGF…VLAS), 585-605 (FFQT…ILAI), 626-648 (AVTR…FLKF), 691-711 (FLFF…TYYF), and 724-744 (IAVP…VFFG).

It belongs to the CTL (choline transporter-like) family.

The protein localises to the membrane. The chain is Choline transporter-like 2 from Drosophila melanogaster (Fruit fly).